The chain runs to 276 residues: Rhamnulose-1-phosphate aldolase (276 aa).

Glu117 is an active-site residue. The Zn(2+) site is built by His141, His143, and His212.

Belongs to the aldolase class II family. RhaD subfamily. In terms of assembly, homotetramer. Zn(2+) serves as cofactor.

The protein localises to the cytoplasm. The enzyme catalyses L-rhamnulose 1-phosphate = (S)-lactaldehyde + dihydroxyacetone phosphate. It participates in carbohydrate degradation; L-rhamnose degradation; glycerone phosphate from L-rhamnose: step 3/3. In terms of biological role, catalyzes the reversible cleavage of L-rhamnulose-1-phosphate to dihydroxyacetone phosphate (DHAP) and L-lactaldehyde. In Enterobacter sp. (strain 638), this protein is Rhamnulose-1-phosphate aldolase.